Reading from the N-terminus, the 518-residue chain is Protein translocase subunit SecD (518 aa).

Helical transmembrane passes span 9-29 (IVLS…NFIQ), 356-376 (GKKA…LSYG), 377-397 (VIGL…LALL), 406-426 (LPGI…NVLI), 451-473 (AFAT…YIFG), and 486-506 (IGII…IDIW).

Belongs to the SecD/SecF family. SecD subfamily. As to quaternary structure, forms a complex with SecF. Part of the essential Sec protein translocation apparatus which comprises SecA, SecYEG and auxiliary proteins SecDF-YajC and YidC.

It is found in the cell inner membrane. In terms of biological role, part of the Sec protein translocase complex. Interacts with the SecYEG preprotein conducting channel. SecDF uses the proton motive force (PMF) to complete protein translocation after the ATP-dependent function of SecA. The polypeptide is Protein translocase subunit SecD (Rickettsia typhi (strain ATCC VR-144 / Wilmington)).